Here is a 155-residue protein sequence, read N- to C-terminus: MINEKADSLVNAFKELLSQESFGSQSEIVSALQQMGFTHVNQSKVSRMLTKFGAVRTRNTRMEMVYCLPNELSVPNTGSPLKNLVLDVDHNETLIVIKTSPGAAQLIARLLDSVGKSEGILGTIAGDDTIFVTPTTGNDIQVLITNIQKLFESSL.

Belongs to the ArgR family.

The protein resides in the cytoplasm. Its pathway is amino-acid biosynthesis; L-arginine biosynthesis [regulation]. Regulates arginine biosynthesis genes. In Histophilus somni (strain 129Pt) (Haemophilus somnus), this protein is Arginine repressor.